A 194-amino-acid polypeptide reads, in one-letter code: Orotate phosphoribosyltransferase (194 aa).

Residues R102, K103, K106, H108, and 129–137 (EDVVTTGGS) each bind 5-phospho-alpha-D-ribose 1-diphosphate. Residues T133 and R161 each coordinate orotate.

The protein belongs to the purine/pyrimidine phosphoribosyltransferase family. PyrE subfamily. In terms of assembly, homodimer. Mg(2+) serves as cofactor.

The catalysed reaction is orotidine 5'-phosphate + diphosphate = orotate + 5-phospho-alpha-D-ribose 1-diphosphate. Its pathway is pyrimidine metabolism; UMP biosynthesis via de novo pathway; UMP from orotate: step 1/2. Catalyzes the transfer of a ribosyl phosphate group from 5-phosphoribose 1-diphosphate to orotate, leading to the formation of orotidine monophosphate (OMP). The sequence is that of Orotate phosphoribosyltransferase from Synechococcus sp. (strain CC9902).